The following is a 238-amino-acid chain: DNA repair protein RAD59 (238 aa).

It belongs to the RAD52 family. In terms of assembly, interacts with RAD51 and RAD52.

The protein localises to the nucleus. Involved in the repair of double-strand breaks in DNA during vegetative growth via recombination and single-strand annealing. Anneals complementary single-stranded DNA. This Saccharomyces cerevisiae (strain ATCC 204508 / S288c) (Baker's yeast) protein is DNA repair protein RAD59 (RAD59).